A 358-amino-acid chain; its full sequence is Alanine racemase (358 aa).

Residue Lys-35 is the Proton acceptor; specific for D-alanine of the active site. Lys-35 bears the N6-(pyridoxal phosphate)lysine mark. Residue Arg-130 participates in substrate binding. The active-site Proton acceptor; specific for L-alanine is the Tyr-255. Met-303 is a binding site for substrate.

It belongs to the alanine racemase family. Pyridoxal 5'-phosphate is required as a cofactor.

The enzyme catalyses L-alanine = D-alanine. The protein operates within amino-acid biosynthesis; D-alanine biosynthesis; D-alanine from L-alanine: step 1/1. In terms of biological role, catalyzes the interconversion of L-alanine and D-alanine. May also act on other amino acids. This chain is Alanine racemase (alr), found in Shewanella loihica (strain ATCC BAA-1088 / PV-4).